The following is a 355-amino-acid chain: tRNA pseudouridine synthase D (355 aa).

Aspartate 84 (nucleophile) is an active-site residue. Residues 160–306 (GVPNYFGLQR…MAHERRILRL (147 aa)) enclose the TRUD domain.

This sequence belongs to the pseudouridine synthase TruD family.

The enzyme catalyses uridine(13) in tRNA = pseudouridine(13) in tRNA. In terms of biological role, responsible for synthesis of pseudouridine from uracil-13 in transfer RNAs. In Pseudomonas aeruginosa (strain ATCC 15692 / DSM 22644 / CIP 104116 / JCM 14847 / LMG 12228 / 1C / PRS 101 / PAO1), this protein is tRNA pseudouridine synthase D.